Here is a 322-residue protein sequence, read N- to C-terminus: NADH-quinone oxidoreductase subunit H (322 aa).

8 helical membrane passes run 14 to 34 (IFMH…YMSF), 81 to 101 (YIFV…IPVI), 114 to 134 (VGVL…LLAG), 149 to 169 (SIAQ…GIVA), 186 to 206 (LWNI…GMAL), 237 to 257 (FFIS…TLFF), 265 to 285 (FPPV…FVLI), and 302 to 322 (WKFL…YILI).

It belongs to the complex I subunit 1 family. NDH-1 is composed of 13 different subunits. Subunits NuoA, H, J, K, L, M, N constitute the membrane sector of the complex.

It localises to the cell inner membrane. It catalyses the reaction a quinone + NADH + 5 H(+)(in) = a quinol + NAD(+) + 4 H(+)(out). Functionally, NDH-1 shuttles electrons from NADH, via FMN and iron-sulfur (Fe-S) centers, to quinones in the respiratory chain. The immediate electron acceptor for the enzyme in this species is believed to be ubiquinone. Couples the redox reaction to proton translocation (for every two electrons transferred, four hydrogen ions are translocated across the cytoplasmic membrane), and thus conserves the redox energy in a proton gradient. This subunit may bind ubiquinone. This is NADH-quinone oxidoreductase subunit H from Blochmanniella floridana.